The sequence spans 462 residues: Argininosuccinate lyase (462 aa).

The protein belongs to the lyase 1 family. Argininosuccinate lyase subfamily.

It is found in the cytoplasm. It catalyses the reaction 2-(N(omega)-L-arginino)succinate = fumarate + L-arginine. It participates in amino-acid biosynthesis; L-arginine biosynthesis; L-arginine from L-ornithine and carbamoyl phosphate: step 3/3. The protein is Argininosuccinate lyase of Bacillus cytotoxicus (strain DSM 22905 / CIP 110041 / 391-98 / NVH 391-98).